A 565-amino-acid polypeptide reads, in one-letter code: 13S globulin seed storage protein 1 (565 aa).

The N-terminal stretch at 1–20 is a signal peptide; it reads MSTKLILSFSLCLMVLSCSA. 2 disulfide bridges follow: Cys44–Cys77 and Cys120–Cys384. The Cupin type-1 1 domain maps to 49-331; sequence LTASEPSRRV…FRNVDQETIS (283 aa). 3 disordered regions span residues 126-224, 271-301, and 356-376; these read SESE…IRDG, GQSK…SDDD, and EYEE…SGRS. Basic and acidic residues-rich tracts occupy residues 137–224, 275–297, and 356–370; these read RDQR…IRDG, QSRE…QSRE, and EYEE…DRKR. Residues 390 to 539 form the Cupin type-1 2 domain; it reads QNVNRPSRAD…SYDISTKEAF (150 aa).

The protein belongs to the 11S seed storage protein (globulins) family. As to quaternary structure, hexamer; each subunit is composed of an acidic and a basic chain derived from a single precursor and linked by a disulfide bond. Expressed only in immature seeds.

Seed storage protein. The chain is 13S globulin seed storage protein 1 (FA02) from Fagopyrum esculentum (Common buckwheat).